A 249-amino-acid polypeptide reads, in one-letter code: Ribonuclease 3 (249 aa).

The RNase III domain maps to 29 to 151 (SSDIEVIKKN…LIGALYECLR (123 aa)). Glu65 contacts Mg(2+). Residue Asp69 is part of the active site. Glu137 and Glu140 together coordinate Mg(2+). Glu140 is an active-site residue. In terms of domain architecture, DRBM spans 179–249 (NEKSALQEWS…AKEALKKLTN (71 aa)). A disordered region spans residues 227–249 (GWGSSRKKAQKEAAKEALKKLTN). Residues 236 to 249 (QKEAAKEALKKLTN) are compositionally biased toward basic and acidic residues.

This sequence belongs to the ribonuclease III family. Homodimer. The cofactor is Mg(2+).

It is found in the cytoplasm. It carries out the reaction Endonucleolytic cleavage to 5'-phosphomonoester.. In terms of biological role, digests double-stranded RNA. Involved in the processing of primary rRNA transcript to yield the immediate precursors to the large and small rRNAs (23S and 16S). Processes some mRNAs, and tRNAs when they are encoded in the rRNA operon. Processes pre-crRNA and tracrRNA of type II CRISPR loci if present in the organism. The protein is Ribonuclease 3 of Prochlorococcus marinus (strain SARG / CCMP1375 / SS120).